A 370-amino-acid polypeptide reads, in one-letter code: Chloromuconate cycloisomerase (370 aa).

The active-site Proton acceptor is K165. Mn(2+) is bound by residues D194, E220, and D245. The Proton donor role is filled by E323.

The protein belongs to the mandelate racemase/muconate lactonizing enzyme family. Requires Mn(2+) as cofactor.

It carries out the reaction 2-[(2R)-2-chloro-2,5-dihydro-5-oxofuryl]acetate = 3-chloro-cis,cis-muconate + H(+). The protein operates within aromatic compound metabolism; 3-chlorocatechol degradation. This Cupriavidus pinatubonensis (strain JMP 134 / LMG 1197) (Cupriavidus necator (strain JMP 134)) protein is Chloromuconate cycloisomerase (tfdDI).